The chain runs to 520 residues: GMP synthase [glutamine-hydrolyzing] (520 aa).

One can recognise a Glutamine amidotransferase type-1 domain in the interval 13–205 (KIIVLDYGSQ…ALNICKAKGD (193 aa)). The Nucleophile role is filled by Cys90. Catalysis depends on residues His179 and Glu181. The GMPS ATP-PPase domain maps to 206-395 (WSMDNFIDMQ…LGMPDHIVWR (190 aa)). 233–239 (SGGVDSS) contacts ATP.

Homodimer.

It carries out the reaction XMP + L-glutamine + ATP + H2O = GMP + L-glutamate + AMP + diphosphate + 2 H(+). Its pathway is purine metabolism; GMP biosynthesis; GMP from XMP (L-Gln route): step 1/1. Functionally, catalyzes the synthesis of GMP from XMP. This chain is GMP synthase [glutamine-hydrolyzing], found in Streptococcus pneumoniae (strain P1031).